We begin with the raw amino-acid sequence, 126 residues long: C-type natriuretic peptide (126 aa).

The signal sequence occupies residues 1 to 23 (MHLSQLLACALLLSLLSLRPSEA). Positions 20-71 (PSEAKPGAPPKVPRTPPGEEVAEPQAAGGGQKKGDKTPGGGGANLKDDRSRL) are disordered. The propeptide occupies 24 to 73 (KPGAPPKVPRTPPGEEVAEPQAAGGGQKKGDKTPGGGGANLKDDRSRLLR). Over residues 26-35 (GAPPKVPRTP) the composition is skewed to pro residues. Residues 46–62 (AGGGQKKGDKTPGGGGA) show a composition bias toward gly residues. Cysteine 110 and cysteine 126 are joined by a disulfide.

It belongs to the natriuretic peptide family. Post-translationally, degraded by IDE (in vitro).

The protein localises to the secreted. Hormone which plays a role in endochondral ossification through regulation of cartilaginous growth plate chondrocytes proliferation and differentiation. May also be vasoactive and natriuretic. Acts by specifically binding and stimulating NPR2 to produce cGMP. Binds the clearance receptor NPR3. This chain is C-type natriuretic peptide (NPPC), found in Ovis aries (Sheep).